We begin with the raw amino-acid sequence, 489 residues long: Rhamnulokinase (489 aa).

13-17 (ASSGR) serves as a coordination point for ATP. Residues C68 and C222 are joined by a disulfide bond. Residues G83 and 236–238 (HDT) contribute to the substrate site. D237 functions as the Proton acceptor in the catalytic mechanism. ATP is bound at residue T259. N296 is a substrate binding site. Q304 contacts ATP. A disulfide bond links C353 and C370. Residue G402 coordinates ATP. Residues C413 and C417 are joined by a disulfide bond.

It belongs to the rhamnulokinase family. Monomer. Mg(2+) serves as cofactor.

The enzyme catalyses L-rhamnulose + ATP = L-rhamnulose 1-phosphate + ADP + H(+). The protein operates within carbohydrate degradation; L-rhamnose degradation; glycerone phosphate from L-rhamnose: step 2/3. Its function is as follows. Involved in the catabolism of L-rhamnose (6-deoxy-L-mannose). Catalyzes the transfer of the gamma-phosphate group from ATP to the 1-hydroxyl group of L-rhamnulose to yield L-rhamnulose 1-phosphate. This is Rhamnulokinase from Escherichia coli (strain SE11).